The chain runs to 234 residues: Purine nucleoside phosphorylase DeoD-type (234 aa).

His-5 provides a ligand contact to a purine D-ribonucleoside. Residues Gly-21, Arg-25, Arg-44, and 88-91 contribute to the phosphate site; that span reads RIGS. Residues 180-182 and 204-205 contribute to the a purine D-ribonucleoside site; these read EME and SD. The active-site Proton donor is Asp-205.

The protein belongs to the PNP/UDP phosphorylase family. As to quaternary structure, homohexamer; trimer of homodimers.

It carries out the reaction a purine D-ribonucleoside + phosphate = a purine nucleobase + alpha-D-ribose 1-phosphate. It catalyses the reaction a purine 2'-deoxy-D-ribonucleoside + phosphate = a purine nucleobase + 2-deoxy-alpha-D-ribose 1-phosphate. Catalyzes the reversible phosphorolytic breakdown of the N-glycosidic bond in the beta-(deoxy)ribonucleoside molecules, with the formation of the corresponding free purine bases and pentose-1-phosphate. The polypeptide is Purine nucleoside phosphorylase DeoD-type (Colwellia psychrerythraea (strain 34H / ATCC BAA-681) (Vibrio psychroerythus)).